A 321-amino-acid chain; its full sequence is MTQTAAQQPSPRLVSGHGLATTAADGAVLDVWFPAPVAGPLSAADASLRDTLRALAADDADRGTTQAVVELEVDLDAAPASTADAWLRLHALSHRLARPNELNLDGVFGLLTNVVWTNHGPCAVADFELTRARLRARGAVQVYGVDKFPRMTDYVVPSGVRIGDADRVRLGAHLAEGTTVMHEGFVNFNAGTLGNSMVEGRISAGVVVGDGSDVGGGASIMGTLSGGGTQRIVVGEHVLLGANSGVGISVGDDCVVEAGLYVTAGTRVSVLQDGEAAHTVKAVDLSGVPNLLFRRNSTTGGVEALPRAGRTVELNAALHAN.

Residues Asp166 and Glu183 each contribute to the Mg(2+) site. Residue Glu199 is the Acyl-anhydride intermediate of the active site. Residues Arg201, Gly216, Ser219, Ala242, 257 to 258 (EA), Gly265, Lys281, and 294 to 297 (RRNS) contribute to the succinyl-CoA site.

The protein belongs to the type 2 tetrahydrodipicolinate N-succinyltransferase family. Homotrimer.

The protein localises to the cytoplasm. It carries out the reaction (S)-2,3,4,5-tetrahydrodipicolinate + succinyl-CoA + H2O = (S)-2-succinylamino-6-oxoheptanedioate + CoA. The protein operates within amino-acid biosynthesis; L-lysine biosynthesis via DAP pathway; LL-2,6-diaminopimelate from (S)-tetrahydrodipicolinate (succinylase route): step 1/3. In terms of biological role, catalyzes the conversion of the cyclic tetrahydrodipicolinate (THDP) into the acyclic N-succinyl-L-2-amino-6-oxopimelate using succinyl-CoA. The sequence is that of 2,3,4,5-tetrahydropyridine-2,6-dicarboxylate N-succinyltransferase from Micrococcus luteus (strain ATCC 4698 / DSM 20030 / JCM 1464 / CCM 169 / CCUG 5858 / IAM 1056 / NBRC 3333 / NCIMB 9278 / NCTC 2665 / VKM Ac-2230) (Micrococcus lysodeikticus).